The sequence spans 442 residues: Proline--tRNA ligase (442 aa).

Belongs to the class-II aminoacyl-tRNA synthetase family. ProS type 2 subfamily. In terms of assembly, homodimer.

The protein resides in the cytoplasm. The catalysed reaction is tRNA(Pro) + L-proline + ATP = L-prolyl-tRNA(Pro) + AMP + diphosphate. Catalyzes the attachment of proline to tRNA(Pro) in a two-step reaction: proline is first activated by ATP to form Pro-AMP and then transferred to the acceptor end of tRNA(Pro). The protein is Proline--tRNA ligase of Brucella anthropi (strain ATCC 49188 / DSM 6882 / CCUG 24695 / JCM 21032 / LMG 3331 / NBRC 15819 / NCTC 12168 / Alc 37) (Ochrobactrum anthropi).